Here is a 290-residue protein sequence, read N- to C-terminus: D-tagatose-1,6-bisphosphate aldolase subunit KbaY (290 aa).

Catalysis depends on D82, which acts as the Proton donor. Zn(2+) contacts are provided by H83 and H180. G181 contributes to the dihydroxyacetone phosphate binding site. Zn(2+) is bound at residue H208. Residues 209–211 (GAS) and 230–233 (NVAT) each bind dihydroxyacetone phosphate.

Belongs to the class II fructose-bisphosphate aldolase family. TagBP aldolase KbaY subfamily. Homotetramer. Forms a complex with KbaZ. Zn(2+) serves as cofactor.

The catalysed reaction is D-tagatofuranose 1,6-bisphosphate = D-glyceraldehyde 3-phosphate + dihydroxyacetone phosphate. It functions in the pathway carbohydrate metabolism; D-tagatose 6-phosphate degradation; D-glyceraldehyde 3-phosphate and glycerone phosphate from D-tagatose 6-phosphate: step 2/2. Catalytic subunit of the tagatose-1,6-bisphosphate aldolase KbaYZ, which catalyzes the reversible aldol condensation of dihydroxyacetone phosphate (DHAP or glycerone-phosphate) with glyceraldehyde 3-phosphate (G3P) to produce tagatose 1,6-bisphosphate (TBP). Requires KbaZ subunit for full activity and stability. The protein is D-tagatose-1,6-bisphosphate aldolase subunit KbaY of Salmonella arizonae (strain ATCC BAA-731 / CDC346-86 / RSK2980).